The chain runs to 86 residues: Large ribosomal subunit protein bL31B (86 aa).

Belongs to the bacterial ribosomal protein bL31 family. Type B subfamily. As to quaternary structure, part of the 50S ribosomal subunit.

The chain is Large ribosomal subunit protein bL31B from Vibrio campbellii (strain ATCC BAA-1116).